A 324-amino-acid polypeptide reads, in one-letter code: Calpain-2 catalytic subunit (324 aa).

Residues 1-138 are domain III; it reads YPNTFWMNPQ…KKADYQVVDD (138 aa). Positions 139–153 are linker; the sequence is EIEADLEENDASEDD. Residues 158–324 are domain IV; sequence FRRLFAQLAG…LISWLCFSVL (167 aa). Positions 166, 169, 171, 176, 209, 211, 213, 215, 220, 239, 241, 243, 245, 250, 282, and 285 each coordinate Ca(2+). 2 EF-hand domains span residues 190–224 and 226–261; these read DIKS…FYIL and TKIQ…AGFK.

This sequence belongs to the peptidase C2 family. In terms of assembly, forms a heterodimer with a small (regulatory) subunit (CAPNS1). Interacts with CPEB3; this leads to cleavage of CPEB3. Ca(2+) serves as cofactor. As to expression, ubiquitous.

The protein resides in the cytoplasm. It localises to the cell membrane. It catalyses the reaction Broad endopeptidase specificity.. Its activity is regulated as follows. Activated by 200-1000 micromolar concentrations of calcium and inhibited by calpastatin. In terms of biological role, calcium-regulated non-lysosomal thiol-protease which catalyzes limited proteolysis of substrates involved in cytoskeletal remodeling and signal transduction. Proteolytically cleaves MYOC at 'Arg-226'. Proteolytically cleaves CPEB3 following neuronal stimulation which abolishes CPEB3 translational repressor activity, leading to translation of CPEB3 target mRNAs. The sequence is that of Calpain-2 catalytic subunit (CAPN2) from Sus scrofa (Pig).